A 294-amino-acid polypeptide reads, in one-letter code: Transcription repressor OFP14 (294 aa).

Residues 49–60 (SFKHRRRSSKTR) are compositionally biased toward basic residues. 3 disordered regions span residues 49 to 72 (SFKHRRRSSKTRFSKEEPVYHQDS), 96 to 129 (DDQEDDQHQARVTKNKEKRESSSDDSDDDDDDDD), and 141 to 185 (AVYD…SRST). Composition is skewed to basic and acidic residues over residues 61 to 72 (FSKEEPVYHQDS) and 96 to 117 (DDQEDDQHQARVTKNKEKRESS). Residues 118-128 (SDDSDDDDDDD) are compositionally biased toward acidic residues. Residues 164 to 185 (SSEGRPSMETTSTSSERQSRST) show a composition bias toward low complexity. Positions 195-259 (VLRYTDEPQE…LSAFVDLIIA (65 aa)) constitute an OVATE domain.

As to quaternary structure, interacts with KNAT2 and KNAT3. In terms of tissue distribution, expressed in roots, rosette and cauline leaves, shoots, stems, flower buds and siliques.

It is found in the nucleus. Transcriptional repressor that may regulate multiple aspects of plant growth and development through the regulation of BEL1-LIKE (BLH) and KNOX TALE (KNAT) homeodomain transcription factors. This is Transcription repressor OFP14 (OFP14) from Arabidopsis thaliana (Mouse-ear cress).